Reading from the N-terminus, the 195-residue chain is HTH-type transcriptional regulator BetI (195 aa).

The 61-residue stretch at 8-68 folds into the HTH tetR-type domain; the sequence is EIRRAQLIDA…ATMRHVLRDL (61 aa). Positions 31–50 form a DNA-binding region, H-T-H motif; the sequence is TLASVAQRANISTGIVSHYF.

It participates in amine and polyamine biosynthesis; betaine biosynthesis via choline pathway [regulation]. In terms of biological role, repressor involved in the biosynthesis of the osmoprotectant glycine betaine. It represses transcription of the choline transporter BetT and the genes of BetAB involved in the synthesis of glycine betaine. This is HTH-type transcriptional regulator BetI from Burkholderia mallei (strain NCTC 10247).